Here is a 638-residue protein sequence, read N- to C-terminus: Epithelial sodium channel subunit beta (638 aa).

Residues 1 to 50 (MPVKKYLLKCLHRLQKGPGYTYKELLVWYCNNTNTHGPKRIICEGPKKKA) are Cytoplasmic-facing. Residues 51–71 (MWFLLTLLFACLVCWQWGVFI) form a helical membrane-spanning segment. Topologically, residues 72–530 (QTYLSWEVSV…GGQFGFWMGG (459 aa)) are extracellular. 9 disulfide bridges follow: Cys98–Cys270, Cys182–Cys187, Cys194–Cys201, Cys247–Cys254, Cys359–Cys446, Cys384–Cys442, Cys388–Cys438, Cys397–Cys424, and Cys399–Cys413. N-linked (GlcNAc...) asparagine glycans are attached at residues Asn135 and Asn141. Asn205 carries an N-linked (GlcNAc...) asparagine glycan. A helical transmembrane segment spans residues 531 to 551 (SVLCLIEFGEIIIDFIWITII). The Cytoplasmic segment spans residues 552 to 638 (KLVASCKGLR…MESDSEVEAI (87 aa)). The interval 594–620 (SCRPHGEVYPDQQTLPIPGTPPPNYDS) is disordered. A PY motif; recruits WW domain-containing proteins and is thereby required for ubiquitination and inhibition of the channel by NEDD4 and NEDD4L motif is present at residues 614–618 (PPPNY). Phosphoserine is present on residues Ser631 and Ser633.

The protein belongs to the amiloride-sensitive sodium channel (TC 1.A.6) family. SCNN1B subfamily. In terms of assembly, component of the heterotrimeric epithelial sodium channel (ENaC) composed of an alpha/SCNN1A, a beta/SCNN1B and a gamma/SCNN1G subunit. Interacts with WWP1 (via WW domains). Interacts with WWP2 (via WW domains); inhibits the channel. Interacts with the full-length immature form of PCSK9 (pro-PCSK9). Interacts (N-glycosylated) with BPIFA1; the interaction is direct and inhibits the proteolytic processing of SCNN1A and SCNN1G and the activation of ENaC. In terms of processing, ubiquitinated. Can be ubiquitinated at multiple sites and undergo monoubiquitination and polyubiquitination. Ubiquitination by NEDD4 or NEDD4L inhibits the ENaC channel through endocytosis, intracellular retention and degradation of its individual subunits. However, some studies could not confirm the ubiquitination of this subunit of the ENaC. Post-translationally, N-glycosylated. N-glycosylation is required for interaction with BPIFA1. Phosphorylated on serine and threonine residues. Aldosterone and insulin increase the basal level of phosphorylation. Lung and kidney.

Its subcellular location is the apical cell membrane. It is found in the cytoplasmic vesicle membrane. It catalyses the reaction Na(+)(in) = Na(+)(out). Originally identified and characterized by its inhibition by the diuretic drug amiloride. This is one of the three pore-forming subunits of the heterotrimeric epithelial sodium channel (ENaC), a critical regulator of sodium balance and fluid homeostasis. ENaC operates in epithelial tissues, where it mediates the electrodiffusion of sodium ions from extracellular fluid through the apical membrane of cells, with water following osmotically. It plays a key role in maintaining sodium homeostasis through electrogenic sodium reabsorption in the kidneys. This subunit is not essential for ENaC function in airway surface liquid homeostasis and proper mucus clearance. In Mus musculus (Mouse), this protein is Epithelial sodium channel subunit beta.